Here is a 324-residue protein sequence, read N- to C-terminus: Testisin (324 aa).

An N-terminal signal peptide occupies residues 1 to 21 (MGARGKTLVPLLVVVATAAMA). The propeptide occupies 22–54 (LQSTYLQVDPEKPELQEPDLLSGPCGHRTIPSR). 2 disulfide bridges follow: Cys46–Cys167 and Cys80–Cys96. Positions 55-296 (IVGGDDAELG…HYNWIQSTMI (242 aa)) constitute a Peptidase S1 domain. Residues His95 and Asp147 each act as charge relay system in the active site. Asn170, Asn177, and Asn210 each carry an N-linked (GlcNAc...) asparagine glycan. Disulfide bonds link Cys181-Cys254, Cys214-Cys233, and Cys244-Cys272. Residue Ser248 is the Charge relay system of the active site. Asn283 carries an N-linked (GlcNAc...) asparagine glycan. The GPI-anchor amidated asparagine moiety is linked to residue Asn298. Positions 299 to 324 (GLLRPDPVPLLLFLTLAWASSLLRPA) are cleaved as a propeptide — removed in mature form.

The protein belongs to the peptidase S1 family. In terms of tissue distribution, testis.

The protein localises to the cell membrane. In terms of biological role, could regulate proteolytic events associated with testicular germ cell maturation. This is Testisin (Prss21) from Mus musculus (Mouse).